A 165-amino-acid polypeptide reads, in one-letter code: Protein SprT (165 aa).

Positions 20–163 (EKLAQANLKL…RCVHCGEQLV (144 aa)) constitute a SprT-like domain. A Zn(2+)-binding site is contributed by His78. Glu79 is an active-site residue. His82 contacts Zn(2+).

Belongs to the SprT family. The cofactor is Zn(2+).

It localises to the cytoplasm. The chain is Protein SprT from Shigella sonnei (strain Ss046).